We begin with the raw amino-acid sequence, 184 residues long: Photosystem I assembly protein Ycf4 (184 aa).

The next 2 helical transmembrane spans lie at 19–39 (ISNF…VLVG) and 64–84 (LVMS…WCTI).

This sequence belongs to the Ycf4 family.

The protein resides in the plastid. It is found in the chloroplast thylakoid membrane. In terms of biological role, seems to be required for the assembly of the photosystem I complex. The sequence is that of Photosystem I assembly protein Ycf4 from Oenothera elata subsp. hookeri (Hooker's evening primrose).